Here is a 156-residue protein sequence, read N- to C-terminus: Small ribosomal subunit protein uS7 (156 aa).

The protein belongs to the universal ribosomal protein uS7 family. Part of the 30S ribosomal subunit. Contacts proteins S9 and S11.

Functionally, one of the primary rRNA binding proteins, it binds directly to 16S rRNA where it nucleates assembly of the head domain of the 30S subunit. Is located at the subunit interface close to the decoding center, probably blocks exit of the E-site tRNA. The chain is Small ribosomal subunit protein uS7 from Mycobacterium avium (strain 104).